The following is a 324-amino-acid chain: MTKTFRNPQLTKNGELKHLLSIEGLSRDMITHILDTASQFVSLSDSDRDVKKVPLLRGKSVFNLFFENSTRTRTTFEIAAKRLSADVLNLNINASSTSKGESLLDTINNLSAMSADMFVVRHASSGAPYLIAEHVAPHVHVINAGDGRHAHPTQGLLDMYTIRHFKKDFTNLTVAIVGDILHSRVARSDIHALTTLGVPEVRAIGPRTLLPSGLEQMGVRVFHDMEEGLKGVDVVIMLRLQNERMSGALLPSAQEYFKAYGLTPERLALANRDAIVMHPGPMNRGVEIDSAVADGPQSVILNQVTFGIAVRMAVMGIVAGNSDE.

Carbamoyl phosphate-binding residues include Arg71 and Thr72. Lys99 is a binding site for L-aspartate. Residues Arg121, His151, and Gln154 each contribute to the carbamoyl phosphate site. Residues Arg184 and Arg239 each coordinate L-aspartate. 2 residues coordinate carbamoyl phosphate: Gly280 and Pro281.

Belongs to the aspartate/ornithine carbamoyltransferase superfamily. ATCase family. Heterododecamer (2C3:3R2) of six catalytic PyrB chains organized as two trimers (C3), and six regulatory PyrI chains organized as three dimers (R2).

It catalyses the reaction carbamoyl phosphate + L-aspartate = N-carbamoyl-L-aspartate + phosphate + H(+). It functions in the pathway pyrimidine metabolism; UMP biosynthesis via de novo pathway; (S)-dihydroorotate from bicarbonate: step 2/3. Functionally, catalyzes the condensation of carbamoyl phosphate and aspartate to form carbamoyl aspartate and inorganic phosphate, the committed step in the de novo pyrimidine nucleotide biosynthesis pathway. This Cupriavidus necator (strain ATCC 17699 / DSM 428 / KCTC 22496 / NCIMB 10442 / H16 / Stanier 337) (Ralstonia eutropha) protein is Aspartate carbamoyltransferase catalytic subunit.